We begin with the raw amino-acid sequence, 260 residues long: Membrane protein insertase YidC 1 (260 aa).

The first 22 residues, 1–22 (MLKSYRAVLVSLSLLLVFVLSG), serve as a signal peptide directing secretion. Cysteine 23 carries the N-palmitoyl cysteine lipid modification. The S-diacylglycerol cysteine moiety is linked to residue cysteine 23. The next 5 helical transmembrane spans lie at 29–49 (IDAH…SFMI), 52–72 (VAHH…TLVI), 133–153 (LAGC…YYAI), 164–184 (FLWV…IAAL), and 213–233 (MPAM…LYWI).

Belongs to the OXA1/ALB3/YidC family. Type 2 subfamily.

It localises to the cell membrane. Its function is as follows. Required for the insertion and/or proper folding and/or complex formation of integral membrane proteins into the membrane. Involved in integration of membrane proteins that insert both dependently and independently of the Sec translocase complex, as well as at least some lipoproteins. The protein is Membrane protein insertase YidC 1 of Bacillus anthracis.